The following is a 281-amino-acid chain: CCAAT/enhancer-binding protein epsilon (281 aa).

Positions 1 to 30 are disordered; it reads MSHGTYYECEPRAGQQPLEFSGARAGPGEL. Residue lysine 121 forms a Glycyl lysine isopeptide (Lys-Gly) (interchain with G-Cter in SUMO2) linkage. The residue at position 181 (serine 181) is a Phosphoserine. The 64-residue stretch at 204-267 folds into the bZIP domain; it reads SLEYRLRRER…DTLRNLFRQI (64 aa). Positions 208-228 are basic motif; the sequence is RLRRERNNIAVRKSRDKAKRR. The segment at 230-237 is leucine-zipper; sequence LETQQKVL.

It belongs to the bZIP family. C/EBP subfamily. As to quaternary structure, binds DNA as a homodimer and as a heterodimer. Can form stable heterodimers with CEBPA, CEBPB and CEBPD. Interacts with GATA1 and SPI1. Interacts with SMARCD2. Phosphorylated.

It localises to the nucleus. Functionally, transcriptional activator. C/EBP are DNA-binding proteins that recognize two different motifs: the CCAAT homology common to many promoters and the enhanced core homology common to many enhancers. Required for the promyelocyte-myelocyte transition in myeloid differentiation. The chain is CCAAT/enhancer-binding protein epsilon (CEBPE) from Ovis aries (Sheep).